The following is a 141-amino-acid chain: Large ribosomal subunit protein uL11 (141 aa).

The protein belongs to the universal ribosomal protein uL11 family. In terms of assembly, part of the ribosomal stalk of the 50S ribosomal subunit. Interacts with L10 and the large rRNA to form the base of the stalk. L10 forms an elongated spine to which L12 dimers bind in a sequential fashion forming a multimeric L10(L12)X complex. One or more lysine residues are methylated.

Functionally, forms part of the ribosomal stalk which helps the ribosome interact with GTP-bound translation factors. The protein is Large ribosomal subunit protein uL11 of Synechococcus sp. (strain CC9902).